Here is a 165-residue protein sequence, read N- to C-terminus: Copper-resistant cuproprotein CopI (165 aa).

The signal sequence occupies residues 1–23 (MKNRILRPALLCVAALFATTAQA). Residues 25-42 (AGHDHGSAHAGAHAHDAD) show a composition bias toward basic and acidic residues. Residues 25 to 50 (AGHDHGSAHAGAHAHDADTPYGRPGD) are disordered. Residues His-93, Cys-148, His-153, and Met-158 each coordinate Cu(2+).

Belongs to the CopI family. In terms of assembly, monomer.

Its subcellular location is the periplasm. Its function is as follows. Involved in copper tolerance. Required for copper resistance under both aerobic and anaerobic photosynthetic growth conditions. Binds copper. Could be an important defense against copper in the periplasm and may protect not only c type cytochromes but also other proteins with cysteine residues from copper ions that may catalyze nonnative disulfide bond formation. The chain is Copper-resistant cuproprotein CopI from Rubrivivax gelatinosus (Rhodocyclus gelatinosus).